We begin with the raw amino-acid sequence, 398 residues long: MKILVLNCGSSSLKYQLIDMNNEEVLCIGLVERIGIEGSILKHEKAGRDDKYVVEQPMKDHKDAIALVLEAVAHPEFGAVKEMKEIDAVGHRVVHAGEKFATSVVITPEVEEALKECIDLAPLHNPANIMGIDACKAILPDVPMVGVFDTAFHQTMPKSSYLYGLPHELYTKYGVRRYGFHGTSHNYVSQRAAEILGKDIKDLKIVTCHLGNGASIAAVDGGKCVDTSMGFTPLEGLIMGTRCGDIDPAILPFLMRKEGLDADGLDKLMNKESGVYGMTGISSDFRDIEDAAKNGDERAQATLEAYVKKVQKYIGAYAAEMNGLDVVVFTAGVGENGKAIRADIASNMEFLGMKLDKEANDVRGKETVISTADSKVKMLLIPTNEELMIARDTLRLVK.

Residue N7 participates in Mg(2+) binding. ATP is bound at residue K14. R92 contributes to the substrate binding site. D149 acts as the Proton donor/acceptor in catalysis. ATP-binding positions include 209-213 (HLGNG), 284-286 (DFR), and 332-336 (GVGEN). E385 is a Mg(2+) binding site.

It belongs to the acetokinase family. As to quaternary structure, homodimer. Mg(2+) is required as a cofactor. It depends on Mn(2+) as a cofactor.

It localises to the cytoplasm. The catalysed reaction is acetate + ATP = acetyl phosphate + ADP. It functions in the pathway metabolic intermediate biosynthesis; acetyl-CoA biosynthesis; acetyl-CoA from acetate: step 1/2. Its function is as follows. Catalyzes the formation of acetyl phosphate from acetate and ATP. Can also catalyze the reverse reaction. The protein is Acetate kinase of Clostridioides difficile (strain 630) (Peptoclostridium difficile).